The following is a 125-amino-acid chain: Allatostatin (125 aa).

Positions 1 to 26 (MKTSAYNVYLGVVAAMLALLFVTINA) are cleaved as a signal peptide. Positions 27 to 106 (APMEADDETA…SRLARQWRAD (80 aa)) are excised as a propeptide. At glutamine 109 the chain carries Pyrrolidone carboxylic acid.

It belongs to the allatostatin family.

Its subcellular location is the secreted. Functionally, strongly inhibits juvenile hormone biosynthesis in vitro by the corpora allata from fifth-stadium larvae and adult females. The protein is Allatostatin of Spodoptera frugiperda (Fall armyworm).